We begin with the raw amino-acid sequence, 87 residues long: Beta-toxin Ct17 (87 aa).

Residues 1–19 form the signal peptide; that stretch reads MNSLLMITACLVLIGTVWA. Residues 20-85 enclose the LCN-type CS-alpha/beta domain; sequence KKDGYLVDKT…TWPLPNKRCG (66 aa). Cystine bridges form between Cys-31/Cys-84, Cys-35/Cys-60, Cys-44/Cys-65, and Cys-48/Cys-67. Cys-84 carries the cysteine amide modification.

This sequence belongs to the long (4 C-C) scorpion toxin superfamily. Sodium channel inhibitor family. Beta subfamily. Expressed by the venom gland.

Its subcellular location is the secreted. Its function is as follows. Beta toxins bind voltage-independently at site-4 of sodium channels (Nav) and shift the voltage of activation toward more negative potentials thereby affecting sodium channel activation and promoting spontaneous and repetitive firing. Is possibly lethal to mice, freshwater shrimp and crickets. In Centruroides tecomanus (Scorpion), this protein is Beta-toxin Ct17.